Consider the following 764-residue polypeptide: Putative alpha-1,3-mannosyltransferase MNN13 (764 aa).

At 1–13 the chain is on the cytoplasmic side; sequence MIKPILGTKKIRR. A helical transmembrane segment spans residues 14–34; sequence VICIIIGLFCILLLIGIFKHN. Over 35 to 764 the chain is Lumenal; the sequence is STNSVNNEAS…YLGDVWVGKY (730 aa). Residues N45 and N204 are each glycosylated (N-linked (GlcNAc...) asparagine).

The protein belongs to the MNN1/MNT family.

The protein resides in the golgi apparatus membrane. Its pathway is protein modification; protein glycosylation. Responsible for addition of the terminal mannose residues to the outer chain of core N-linked polysaccharides and to O-linked mannotriose. Implicated in late Golgi modifications. This chain is Putative alpha-1,3-mannosyltransferase MNN13 (MNN13), found in Candida albicans (strain SC5314 / ATCC MYA-2876) (Yeast).